Reading from the N-terminus, the 251-residue chain is MQIHLLIVDALNLIRRIHAVQGSPCVKACQHALQQLIQHSQPSHAVAVFDEDDRSDSWRHQCLPDYKAGRSPMPDNLQQEMPLIRQAFNELGVACWHSPGNEADDLAATLVVKVAGAGHQVTIVSTDKGYCQLLAPNVQIRDYFQKRWLDMPFVKQEFGVLPRQLPDYWGLAGISSSKIPGVAGVGAKTATLLLQQADTLEVLYQNLESIPEKWRKKLQQHQQMAFTCKQIATLKTDLLLSGNLQQLRLKK.

Aspartate 104 contributes to the Mg(2+) binding site. One can recognise a 5'-3' exonuclease domain in the interval 160–250 (VLPRQLPDYW…SGNLQQLRLK (91 aa)). K(+)-binding residues include leucine 171, alanine 172, proline 180, valine 182, and valine 185. Positions 184–189 (GVGAKT) are interaction with DNA.

Belongs to the Xni family. Mg(2+) serves as cofactor. The cofactor is K(+).

In terms of biological role, has flap endonuclease activity. During DNA replication, flap endonucleases cleave the 5'-overhanging flap structure that is generated by displacement synthesis when DNA polymerase encounters the 5'-end of a downstream Okazaki fragment. The polypeptide is Flap endonuclease Xni (Yersinia pseudotuberculosis serotype I (strain IP32953)).